Reading from the N-terminus, the 600-residue chain is Elongation factor 4 (600 aa).

One can recognise a tr-type G domain in the interval 6-188 (KLIRNFSIIA…AVVERIPAPK (183 aa)). GTP-binding positions include 18–23 (DHGKST) and 135–138 (NKID).

It belongs to the TRAFAC class translation factor GTPase superfamily. Classic translation factor GTPase family. LepA subfamily.

It localises to the cell inner membrane. It catalyses the reaction GTP + H2O = GDP + phosphate + H(+). Required for accurate and efficient protein synthesis under certain stress conditions. May act as a fidelity factor of the translation reaction, by catalyzing a one-codon backward translocation of tRNAs on improperly translocated ribosomes. Back-translocation proceeds from a post-translocation (POST) complex to a pre-translocation (PRE) complex, thus giving elongation factor G a second chance to translocate the tRNAs correctly. Binds to ribosomes in a GTP-dependent manner. This is Elongation factor 4 from Sorangium cellulosum (strain So ce56) (Polyangium cellulosum (strain So ce56)).